The primary structure comprises 312 residues: MTHSTPIRIATRKSPLALWQAYYVKDALQKAHPGLEVELVTMVTKGDVILDTPLAKVGGKGLFVKELEVAMLEGRADLAVHSMKDVPVDFPEGLGLVTICEREDPRDAFVSNTYHHVDELPQGAVVGTCSLRRQCQLKAYRPDLVIKELRGNVGTRLSKLDAGEYDAIILAAAGLKRLELEERIRSFIEPEQSLPAVGQGAVGIECRTNDERILKLLEPLNHADTADRVKCERAMNLTLEGGCQVPIGSYALLEGDEIWLRALVGEPDGSEIVRGEIRGPRAQAEQLGVQLANQLLDEGAREILTKLYQDHE.

Cysteine 243 bears the S-(dipyrrolylmethanemethyl)cysteine mark.

Belongs to the HMBS family. In terms of assembly, monomer. Requires dipyrromethane as cofactor.

It catalyses the reaction 4 porphobilinogen + H2O = hydroxymethylbilane + 4 NH4(+). It participates in porphyrin-containing compound metabolism; protoporphyrin-IX biosynthesis; coproporphyrinogen-III from 5-aminolevulinate: step 2/4. Functionally, tetrapolymerization of the monopyrrole PBG into the hydroxymethylbilane pre-uroporphyrinogen in several discrete steps. In Vibrio vulnificus (strain CMCP6), this protein is Porphobilinogen deaminase.